An 87-amino-acid chain; its full sequence is Small ribosomal subunit protein bS20 (87 aa).

The interval 1 to 25 (MANTAQARKRARQSVQRNKHNSSLR) is disordered. Basic residues predominate over residues 7–22 (ARKRARQSVQRNKHNS).

This sequence belongs to the bacterial ribosomal protein bS20 family.

Its function is as follows. Binds directly to 16S ribosomal RNA. In Bordetella bronchiseptica (strain ATCC BAA-588 / NCTC 13252 / RB50) (Alcaligenes bronchisepticus), this protein is Small ribosomal subunit protein bS20.